The chain runs to 279 residues: uncharacterized protein (279 aa).

This is an uncharacterized protein from Acanthamoeba polyphaga mimivirus (APMV).